The chain runs to 636 residues: Sodium-dependent proline transporter (636 aa).

Residues methionine 1–aspartate 45 lie on the Cytoplasmic side of the membrane. A Phosphothreonine modification is found at threonine 20. Residue serine 22 is modified to Phosphoserine. A run of 3 helical transmembrane segments spans residues phenylalanine 46–arginine 66, alanine 74–leucine 93, and glycine 117–isoleucine 137. Topologically, residues alanine 138–arginine 214 are extracellular. The N-linked (GlcNAc...) asparagine glycan is linked to asparagine 182. The next 9 helical transmembrane spans lie at tryptophan 215–leucine 233, valine 242–valine 259, isoleucine 295–tyrosine 312, phenylalanine 324–leucine 345, leucine 378–leucine 397, valine 425–threonine 443, serine 459–isoleucine 479, alanine 500–valine 519, and leucine 538–valine 556. Residues alanine 557–methionine 636 are Cytoplasmic-facing. A phosphoserine mark is found at serine 573 and serine 582. Threonine 588 carries the phosphothreonine modification. Tyrosine 591 bears the Phosphotyrosine mark. Phosphoserine occurs at positions 598 and 600.

It belongs to the sodium:neurotransmitter symporter (SNF) (TC 2.A.22) family. SLC6A7 subfamily. In terms of tissue distribution, brain specific (at protein level). Highly expressed in hippocampus, corpus striatum and temporal cortex. Also expressed in frontal cortex, occipital cortex and, at lower levels, in cerebellum and parietal cortex (at protein level).

It localises to the synaptic cell membrane. It carries out the reaction L-proline(out) + chloride(out) + 2 Na(+)(out) = L-proline(in) + chloride(in) + 2 Na(+)(in). The catalysed reaction is L-pipecolate(out) + chloride(out) + 2 Na(+)(out) = L-pipecolate(in) + chloride(in) + 2 Na(+)(in). Its function is as follows. Brain specific sodium (and chloride)-dependent proline transporter. Terminates the action of proline by its high affinity sodium-dependent reuptake into presynaptic terminals. The protein is Sodium-dependent proline transporter of Homo sapiens (Human).